The sequence spans 691 residues: Guanylate cyclase soluble subunit alpha-1 (691 aa).

Phosphoserine is present on serine 267. Residues 480 to 607 (VTMLFSDIVG…GNNVTLANKF (128 aa)) enclose the Guanylate cyclase domain.

This sequence belongs to the adenylyl cyclase class-4/guanylyl cyclase family. The active enzyme is formed by a heterodimer of an alpha and a beta subunit. Heterodimer with GUCY1B1. The cofactor is Mg(2+). Requires Mn(2+) as cofactor.

It localises to the cytoplasm. It catalyses the reaction GTP = 3',5'-cyclic GMP + diphosphate. Activated by nitric oxide in the presence of magnesium or manganese ions. The sequence is that of Guanylate cyclase soluble subunit alpha-1 (Gucy1a1) from Mus musculus (Mouse).